A 305-amino-acid polypeptide reads, in one-letter code: Flagellin FlaB2 (305 aa).

A propeptide spans 1 to 18 (propeptide); sequence MGLQKIVKKYNKKMKRKG.

Belongs to the archaeal flagellin family. In terms of processing, glycosylated.

The protein localises to the archaeal flagellum. Its function is as follows. Flagellin is the subunit protein which polymerizes to form the filaments of archaeal flagella. This Saccharolobus shibatae (strain ATCC 51178 / DSM 5389 / JCM 8931 / NBRC 15437 / B12) (Sulfolobus shibatae) protein is Flagellin FlaB2.